Reading from the N-terminus, the 100-residue chain is Urease subunit gamma (100 aa).

It belongs to the urease gamma subunit family. Heterotrimer of UreA (gamma), UreB (beta) and UreC (alpha) subunits. Three heterotrimers associate to form the active enzyme.

The protein resides in the cytoplasm. The catalysed reaction is urea + 2 H2O + H(+) = hydrogencarbonate + 2 NH4(+). The protein operates within nitrogen metabolism; urea degradation; CO(2) and NH(3) from urea (urease route): step 1/1. The sequence is that of Urease subunit gamma from Sinorhizobium fredii (strain NBRC 101917 / NGR234).